The following is a 222-amino-acid chain: Interleukin-12 subunit alpha (222 aa).

An N-terminal signal peptide occupies residues M1–G25. Intrachain disulfides connect C40–C113, C67–C199, and C88–C126. N-linked (GlcNAc...) asparagine glycosylation is found at N42 and N96.

Belongs to the IL-6 superfamily. As to quaternary structure, heterodimer with IL12B; disulfide-linked. This heterodimer is known as interleukin IL-12. Heterodimer with EBI3/IL27B; not disulfide-linked. This heterodimer is known as interleukin IL-35. Interacts with NBR1; this interaction promotes IL-12 secretion.

It is found in the secreted. Functionally, heterodimerizes with IL12B to form the IL-12 cytokine or with EBI3/IL27B to form the IL-35 cytokine. IL-12 is primarily produced by professional antigen-presenting cells (APCs) such as B-cells and dendritic cells (DCs) as well as macrophages and granulocytes and regulates T-cell and natural killer-cell responses, induces the production of interferon-gamma (IFN-gamma), favors the differentiation of T-helper 1 (Th1) cells and is an important link between innate resistance and adaptive immunity. Mechanistically, exerts its biological effects through a receptor composed of IL12R1 and IL12R2 subunits. Binding to the receptor results in the rapid tyrosine phosphorylation of a number of cellular substrates including the JAK family kinases TYK2 and JAK2. In turn, recruited STAT4 gets phosphorylated and translocates to the nucleus where it regulates cytokine/growth factor responsive genes. As part of IL-35, plays essential roles in maintaining the immune homeostasis of the liver microenvironment and also functions as an immune-suppressive cytokine. Mediates biological events through unconventional receptors composed of IL12RB2 and gp130/IL6ST heterodimers or homodimers. Signaling requires the transcription factors STAT1 and STAT4, which form a unique heterodimer that binds to distinct DNA sites. The sequence is that of Interleukin-12 subunit alpha (IL12A) from Sus scrofa (Pig).